A 435-amino-acid chain; its full sequence is Aspartate--tRNA(Asp/Asn) ligase (435 aa).

Glu-163 lines the L-aspartate pocket. An aspartate region spans residues 185–188 (QLYK). Arg-206 contributes to the L-aspartate binding site. ATP is bound by residues 206–208 (RAE), 214–216 (RHL), and Glu-358. L-aspartate-binding residues include Ser-361 and Arg-365. Position 406–409 (406–409 (GAER)) interacts with ATP.

Belongs to the class-II aminoacyl-tRNA synthetase family. Type 2 subfamily. Homodimer.

The protein localises to the cytoplasm. The catalysed reaction is tRNA(Asx) + L-aspartate + ATP = L-aspartyl-tRNA(Asx) + AMP + diphosphate. In terms of biological role, aspartyl-tRNA synthetase with relaxed tRNA specificity since it is able to aspartylate not only its cognate tRNA(Asp) but also tRNA(Asn). Reaction proceeds in two steps: L-aspartate is first activated by ATP to form Asp-AMP and then transferred to the acceptor end of tRNA(Asp/Asn). Is slightly more efficient at aminoacylating tRNA(Asn) over tRNA(Asp). The polypeptide is Aspartate--tRNA(Asp/Asn) ligase (aspS2) (Deinococcus radiodurans (strain ATCC 13939 / DSM 20539 / JCM 16871 / CCUG 27074 / LMG 4051 / NBRC 15346 / NCIMB 9279 / VKM B-1422 / R1)).